A 440-amino-acid polypeptide reads, in one-letter code: Cytochrome b (440 aa).

Residues Ile46–Val66 form a helical membrane-spanning segment. His97 and His111 together coordinate heme b. 9 helical membrane-spanning segments follow: residues Gly100 to Ser120, Trp129 to Leu149, Phe156 to Ile176, Phe194 to Trp214, Leu253 to Tyr273, Trp296 to Val315, Phe330 to Asp350, Trp365 to Ala385, and Leu394 to Ile414. Heme b contacts are provided by His198 and His212.

The protein belongs to the cytochrome b family. In terms of assembly, the main subunits of complex b-c1 are: cytochrome b, cytochrome c1 and the Rieske protein. Heme b serves as cofactor.

The protein localises to the cell membrane. Its function is as follows. Component of the ubiquinol-cytochrome c reductase complex (complex III or cytochrome b-c1 complex), which is a respiratory chain that generates an electrochemical potential coupled to ATP synthesis. This is Cytochrome b (petB) from Paracoccus denitrificans.